The sequence spans 87 residues: U3-theraphotoxin-Hhn1d (87 aa).

Residues 1-24 (MVNMKASMFLTFAGLVLLFVVCYA) form the signal peptide. A propeptide spanning residues 25 to 52 (SESEEKEFPKEMLSSIFAVDNDFKQEER) is cleaved from the precursor. 3 disulfides stabilise this stretch: Cys-54–Cys-67, Cys-61–Cys-72, and Cys-66–Cys-79.

This sequence belongs to the neurotoxin 10 (Hwtx-1) family. 51 (Hntx-8) subfamily. Hntx-8 sub-subfamily. As to expression, expressed by the venom gland.

It is found in the secreted. Functionally, ion channel inhibitor. The chain is U3-theraphotoxin-Hhn1d from Cyriopagopus hainanus (Chinese bird spider).